Consider the following 139-residue polypeptide: Putative nickel-responsive regulator (139 aa).

4 residues coordinate Ni(2+): His-79, His-90, His-92, and Cys-98.

The protein belongs to the transcriptional regulatory CopG/NikR family. Requires Ni(2+) as cofactor.

Its function is as follows. Transcriptional regulator. This chain is Putative nickel-responsive regulator, found in Anaeromyxobacter sp. (strain K).